Consider the following 200-residue polypeptide: uncharacterized protein (200 aa).

Disordered regions lie at residues methionine 1–threonine 27, isoleucine 42–alanine 79, and histidine 169–arginine 200. A compositionally biased stretch (basic and acidic residues) spans arginine 187 to arginine 200.

This is an uncharacterized protein from Shigella flexneri.